A 111-amino-acid polypeptide reads, in one-letter code: Small ribosomal subunit protein bS16 (111 aa).

Belongs to the bacterial ribosomal protein bS16 family.

The chain is Small ribosomal subunit protein bS16 from Rickettsia prowazekii (strain Madrid E).